Reading from the N-terminus, the 609-residue chain is CTTNBP2 N-terminal-like protein (609 aa).

Positions 1 to 10 are enriched in polar residues; sequence MEQNSNSSVA. The tract at residues 1–29 is disordered; it reads MEQNSNSSVADTFAEAPATDADYGTENCS. Coiled coils occupy residues 182–264 and 303–370; these read RMVN…QKQI and IAEG…QQLG. The disordered stretch occupies residues 556-584; the sequence is PPAGARGAPPPIPTKPIVPPKREPSLSRL. Over residues 563–574 the composition is skewed to pro residues; that stretch reads APPPIPTKPIVP. S586 bears the Phosphoserine mark.

The protein resides in the cell projection. It is found in the lamellipodium. Its subcellular location is the cytoplasm. The protein localises to the cytoskeleton. It localises to the stress fiber. In terms of biological role, regulates lamellipodial actin dynamics in a Cortactin-dependent manner and is therefore likely involved in controlling actin branch density, actin-retrograde flow rates and lamellipodial protrusion. Functions by slowing the dissociation of Cortactin from Arp2/3 nucleated branches thereby increasing branch nucleation and junction stability. Associates with core striatin-interacting phosphatase and kinase (STRIPAK) complex to form CTTNBP2NL-STRIPAK complexes. STRIPAK complexes have critical roles in protein (de)phosphorylation and are regulators of multiple signaling pathways including Hippo, MAPK, nuclear receptor and cytoskeleton remodeling. Different types of STRIPAK complexes are involved in a variety of biological processes such as cell growth, differentiation, apoptosis, metabolism and immune regulation. The sequence is that of CTTNBP2 N-terminal-like protein from Drosophila melanogaster (Fruit fly).